The following is a 235-amino-acid chain: Mediator of RNA polymerase II transcription subunit 29 (235 aa).

Positions 1-14 (MMNQMGMMMQQQGV) are enriched in low complexity. The interval 1-54 (MMNQMGMMMQQQGVGVPGGPGGVGGVGMPGPGGVGVAPGMMQSPQMQQAQQQQV) is disordered. The span at 15 to 36 (GVPGGPGGVGGVGMPGPGGVGV) shows a compositional bias: gly residues. Residues 37–54 (APGMMQSPQMQQAQQQQV) show a composition bias toward low complexity.

This sequence belongs to the Mediator complex subunit 29 family. In terms of assembly, component of the Mediator complex.

The protein resides in the nucleus. In terms of biological role, component of the Mediator complex, a coactivator involved in the regulated transcription of nearly all RNA polymerase II-dependent genes. Mediator functions as a bridge to convey information from gene-specific regulatory proteins to the basal RNA polymerase II transcription machinery. Mediator is recruited to promoters by direct interactions with regulatory proteins and serves as a scaffold for the assembly of a functional preinitiation complex with RNA polymerase II and the general transcription factors. The chain is Mediator of RNA polymerase II transcription subunit 29 (ix) from Anopheles gambiae (African malaria mosquito).